Reading from the N-terminus, the 86-residue chain is NADH-ubiquinone oxidoreductase chain 4L (86 aa).

The next 2 membrane-spanning stretches (helical) occupy residues L22–Y42 and F52–L72.

Belongs to the complex I subunit 4L family.

The protein localises to the mitochondrion membrane. It catalyses the reaction a ubiquinone + NADH + 5 H(+)(in) = a ubiquinol + NAD(+) + 4 H(+)(out). Its function is as follows. Core subunit of the mitochondrial membrane respiratory chain NADH dehydrogenase (Complex I) that is believed to belong to the minimal assembly required for catalysis. Complex I functions in the transfer of electrons from NADH to the respiratory chain. The immediate electron acceptor for the enzyme is believed to be ubiquinone. The sequence is that of NADH-ubiquinone oxidoreductase chain 4L (ND4L) from Artemia salina (Brine shrimp).